Here is a 286-residue protein sequence, read N- to C-terminus: Diaminopimelate epimerase (286 aa).

Residues Asn-13 and Asn-66 each coordinate substrate. The Proton donor role is filled by Cys-75. Substrate contacts are provided by residues 76–77 (GN), Asn-165, Asn-198, and 216–217 (ER). Residue Cys-225 is the Proton acceptor of the active site. Residue 226–227 (GT) participates in substrate binding.

Belongs to the diaminopimelate epimerase family. As to quaternary structure, homodimer.

Its subcellular location is the cytoplasm. It catalyses the reaction (2S,6S)-2,6-diaminopimelate = meso-2,6-diaminopimelate. Its pathway is amino-acid biosynthesis; L-lysine biosynthesis via DAP pathway; DL-2,6-diaminopimelate from LL-2,6-diaminopimelate: step 1/1. Catalyzes the stereoinversion of LL-2,6-diaminopimelate (L,L-DAP) to meso-diaminopimelate (meso-DAP), a precursor of L-lysine and an essential component of the bacterial peptidoglycan. The protein is Diaminopimelate epimerase of Oceanobacillus iheyensis (strain DSM 14371 / CIP 107618 / JCM 11309 / KCTC 3954 / HTE831).